The following is a 526-amino-acid chain: Sugar transport protein 13 (526 aa).

The Cytoplasmic segment spans residues 1–18; that stretch reads MTGGGFATSANGVEFEAK. Residues 19–39 form a helical membrane-spanning segment; that stretch reads ITPIVIISCIMAATGGLMFGY. Topologically, residues 40-81 are extracellular; the sequence is DVGVSGGVTSMPDFLEKFFPVVYRKVVAGADKDSNYCKYDNQ. A helical transmembrane segment spans residues 82–102; it reads GLQLFTSSLYLAGLTATFFAS. Residues 103–111 are Cytoplasmic-facing; sequence YTTRTLGRR. The helical transmembrane segment at 112 to 132 threads the bilayer; it reads LTMLIAGVFFIIGVALNAGAQ. Residues 133-141 are Extracellular-facing; it reads DLAMLIAGR. Residues 142 to 162 traverse the membrane as a helical segment; the sequence is ILLGCGVGFANQAVPLFLSEI. Over 163-168 the chain is Cytoplasmic; that stretch reads APTRIR. The chain crosses the membrane as a helical span at residues 169–189; the sequence is GGLNILFQLNVTIGILFANLV. Residues 190-203 are Extracellular-facing; it reads NYGTAKIKGGWGWR. A helical transmembrane segment spans residues 204–224; sequence LSLGLAGIPALLLTVGALLVT. The Cytoplasmic segment spans residues 225–296; sequence ETPNSLVERG…IAVALQIFQQ (72 aa). A helical transmembrane segment spans residues 297–317; it reads CTGINAIMFYAPVLFSTLGFG. Over 318–319 the chain is Extracellular; the sequence is SD. The chain crosses the membrane as a helical span at residues 320 to 340; it reads ASLYSAVVTGAVNVLSTLVSI. The Cytoplasmic segment spans residues 341-349; that stretch reads YSVDKVGRR. A helical transmembrane segment spans residues 350-370; the sequence is VLLLEAGVQMFFSQVVIAIIL. The Extracellular segment spans residues 371–383; the sequence is GVKVTDTSTNLSK. Residues 384–404 form a helical membrane-spanning segment; sequence GFAILVVVMICTYVAAFAWSW. The Cytoplasmic portion of the chain corresponds to 405–426; sequence GPLGWLIPSETFPLETRSAGQS. A helical membrane pass occupies residues 427 to 447; the sequence is VTVCVNLLFTFIIAQAFLSML. The Extracellular portion of the chain corresponds to 448 to 451; it reads CHFK. A helical membrane pass occupies residues 452–472; it reads FGIFIFFSAWVLIMSVFVMFL. At 473 to 526 the chain is on the cytoplasmic side; the sequence is LPETKNIPIEEMTERVWKKHWFWARFMDDHNDHEFVNGEKSNGKSNGFDPSTRL.

This sequence belongs to the major facilitator superfamily. Sugar transporter (TC 2.A.1.1) family.

It is found in the cell membrane. In terms of biological role, mediates an active uptake of hexoses, probably by sugar/hydrogen symport. This is Sugar transport protein 13 (STP13) from Arabidopsis thaliana (Mouse-ear cress).